The primary structure comprises 588 residues: Adenine deaminase (588 aa).

It belongs to the metallo-dependent hydrolases superfamily. Adenine deaminase family. In terms of assembly, homodimer. Mn(2+) is required as a cofactor.

It catalyses the reaction adenine + H2O + H(+) = hypoxanthine + NH4(+). This chain is Adenine deaminase, found in Escherichia coli (strain 55989 / EAEC).